Consider the following 503-residue polypeptide: Aromatase (503 aa).

Residue Cys437 participates in heme binding.

It belongs to the cytochrome P450 family. It depends on heme as a cofactor.

It localises to the membrane. The catalysed reaction is testosterone + 3 reduced [NADPH--hemoprotein reductase] + 3 O2 = 17beta-estradiol + formate + 3 oxidized [NADPH--hemoprotein reductase] + 4 H2O + 4 H(+). It carries out the reaction androst-4-ene-3,17-dione + 3 reduced [NADPH--hemoprotein reductase] + 3 O2 = estrone + formate + 3 oxidized [NADPH--hemoprotein reductase] + 4 H2O + 4 H(+). Its function is as follows. Catalyzes the formation of aromatic C18 estrogens from C19 androgens. The polypeptide is Aromatase (CYP19A1) (Oryctolagus cuniculus (Rabbit)).